The chain runs to 414 residues: Protein FAM81B (414 aa).

Positions 1 to 13 are enriched in polar residues; that stretch reads MTSETDINKSASP. Residues 1 to 43 are disordered; it reads MTSETDINKSASPTAAAKEQPEEPDGPLPGSASEQEKKVRFSP. Coiled coils occupy residues 70–94, 121–149, 188–223, and 266–414; these read NTQRSQLEDRLNNQDRTIAFLLEQA, LLENHIQTITSIVKKLSQNIEMIEEQIKA, KLSGDIHFIRNEHQQLEKTIQEMISSLQTVSKNLDT, and LNLY…LQES.

This sequence belongs to the FAM81 family.

This Bos taurus (Bovine) protein is Protein FAM81B (FAM81B).